The primary structure comprises 491 residues: Probable diguanylate cyclase CdgI (491 aa).

Topologically, residues 1 to 54 (MIQSTRISMGLFFKYFLSLTKIDPGQNYISLPSIKSSTHIALLFMVSMGTQKLK) are cytoplasmic. A helical membrane pass occupies residues 55–75 (AQSFFIFSLLLTLILFCITTL). Residues 76–89 (YNENTNVKLIPQMN) lie on the Periplasmic side of the membrane. The chain crosses the membrane as a helical span at residues 90 to 110 (YLMVVVALFFLNAVIFLFMLM). The Cytoplasmic portion of the chain corresponds to 111-121 (KYFTNKQILPT). Residues 122-142 (LILSLAFLSGLIYLVETIVII) form a helical membrane-spanning segment. Residues 143-158 (HKPINGSTLIQTKSND) lie on the Periplasmic side of the membrane. A helical membrane pass occupies residues 159 to 179 (VSIFYIFRQLSFICLTSLALF). Topologically, residues 180-193 (CYGKDNILDNNKKK) are cytoplasmic. The chain crosses the membrane as a helical span at residues 194-214 (TGILLLALIPFLVFPLLAHNL). The Periplasmic segment spans residues 215 to 236 (SSYNADYSLYVVDYCPDNHTAT). Residues 237 to 257 (WGINYTKILVCLWAFLLFFII) form a helical membrane-spanning segment. The Cytoplasmic portion of the chain corresponds to 258 to 265 (MRTRLASE). Residues 266–286 (LWPLIALLCLASLCCNLLLLT) traverse the membrane as a helical segment. Over 287 to 293 (LDEYNYT) the chain is Periplasmic. A helical membrane pass occupies residues 294-314 (IWYISRGIEVSSKLFVVSFLI). Topologically, residues 315–491 (YNIFQELQLS…GGNKVIIHHI (177 aa)) are cytoplasmic. The 136-residue stretch at 356–491 (KDFCVMLVDI…GGNKVIIHHI (136 aa)) folds into the GGDEF domain. Mg(2+) is bound by residues Asp-364 and Ile-365. Asn-372, His-377, and Asp-381 together coordinate substrate. Mg(2+) is bound at residue Glu-407. Glu-407 (proton acceptor) is an active-site residue. Arg-427 provides a ligand contact to substrate.

In terms of assembly, homodimer. It depends on Mg(2+) as a cofactor.

It localises to the cell inner membrane. The catalysed reaction is 2 GTP = 3',3'-c-di-GMP + 2 diphosphate. It participates in purine metabolism; 3',5'-cyclic di-GMP biosynthesis. Functionally, catalyzes the synthesis of cyclic-di-GMP (c-di-GMP) via the condensation of 2 GTP molecules. The sequence is that of Probable diguanylate cyclase CdgI from Escherichia coli (strain K12).